The sequence spans 375 residues: Chaperone protein DnaJ (375 aa).

Residues 6 to 71 (DYYEVLGVPK…EKRRQYDQFG (66 aa)) enclose the J domain. The segment at 138-220 (GTTKKIDVTL…CYGTGYISSK (83 aa)) adopts a CR-type zinc-finger fold. Positions 151, 154, 168, 171, 194, 197, 208, and 211 each coordinate Zn(2+). CXXCXGXG motif repeat units follow at residues 151–158 (CSSCHGTG), 168–175 (CSKCGGRG), 194–201 (CPDCHGTG), and 208–215 (CPDCYGTG).

This sequence belongs to the DnaJ family. In terms of assembly, homodimer. Zn(2+) is required as a cofactor.

Its subcellular location is the cytoplasm. Participates actively in the response to hyperosmotic and heat shock by preventing the aggregation of stress-denatured proteins and by disaggregating proteins, also in an autonomous, DnaK-independent fashion. Unfolded proteins bind initially to DnaJ; upon interaction with the DnaJ-bound protein, DnaK hydrolyzes its bound ATP, resulting in the formation of a stable complex. GrpE releases ADP from DnaK; ATP binding to DnaK triggers the release of the substrate protein, thus completing the reaction cycle. Several rounds of ATP-dependent interactions between DnaJ, DnaK and GrpE are required for fully efficient folding. Also involved, together with DnaK and GrpE, in the DNA replication of plasmids through activation of initiation proteins. The chain is Chaperone protein DnaJ from Lachnospira eligens (strain ATCC 27750 / DSM 3376 / VPI C15-48 / C15-B4) (Eubacterium eligens).